A 335-amino-acid polypeptide reads, in one-letter code: Malate dehydrogenase 1 (335 aa).

NAD(+) is bound by residues 11-16 (GAGNVG) and Asp-35. Residues Arg-97 and Arg-103 each contribute to the substrate site. NAD(+) contacts are provided by residues Asn-110 and 133 to 135 (VTN). 2 residues coordinate substrate: Asn-135 and Arg-166. His-190 functions as the Proton acceptor in the catalytic mechanism.

Belongs to the LDH/MDH superfamily. MDH type 3 family.

It carries out the reaction (S)-malate + NAD(+) = oxaloacetate + NADH + H(+). Functionally, catalyzes the reversible oxidation of malate to oxaloacetate. This is Malate dehydrogenase 1 (mdh1) from Aquifex aeolicus (strain VF5).